The sequence spans 194 residues: Flavin prenyltransferase UbiX (194 aa).

FMN contacts are provided by residues 9–11 (GAS), Ser35, 86–89 (SIKT), and Arg121. Residues Tyr151 and Lys167 each coordinate dimethylallyl phosphate.

Belongs to the UbiX/PAD1 family.

The enzyme catalyses dimethylallyl phosphate + FMNH2 = prenylated FMNH2 + phosphate. Involved in the carboxylation of phenylphosphate. Its function is as follows. Flavin prenyltransferase that catalyzes the synthesis of the prenylated FMN cofactor (prenyl-FMN) for 4-hydroxy-3-polyprenylbenzoic acid decarboxylase UbiD. The prenyltransferase is metal-independent and links a dimethylallyl moiety from dimethylallyl monophosphate (DMAP) to the flavin N5 and C6 atoms of FMN. This is Flavin prenyltransferase UbiX from Thauera aromatica.